A 335-amino-acid polypeptide reads, in one-letter code: Holliday junction branch migration complex subunit RuvB (335 aa).

Positions 1 to 183 (MDERIISSET…FGVIDHLEFY (183 aa)) are large ATPase domain (RuvB-L). ATP is bound by residues L22, R23, G64, K67, T68, T69, 130–132 (EDY), R173, Y183, and R220. T68 serves as a coordination point for Mg(2+). Residues 184-254 (TEEQLTEIVL…LAKEALTLLQ (71 aa)) form a small ATPAse domain (RuvB-S) region. Residues 257-335 (PRGLDTIDQK…HLGISYEKEV (79 aa)) form a head domain (RuvB-H) region. Residues R293, R312, and R317 each coordinate DNA.

The protein belongs to the RuvB family. In terms of assembly, homohexamer. Forms an RuvA(8)-RuvB(12)-Holliday junction (HJ) complex. HJ DNA is sandwiched between 2 RuvA tetramers; dsDNA enters through RuvA and exits via RuvB. An RuvB hexamer assembles on each DNA strand where it exits the tetramer. Each RuvB hexamer is contacted by two RuvA subunits (via domain III) on 2 adjacent RuvB subunits; this complex drives branch migration. In the full resolvosome a probable DNA-RuvA(4)-RuvB(12)-RuvC(2) complex forms which resolves the HJ.

The protein resides in the cytoplasm. The catalysed reaction is ATP + H2O = ADP + phosphate + H(+). Functionally, the RuvA-RuvB-RuvC complex processes Holliday junction (HJ) DNA during genetic recombination and DNA repair, while the RuvA-RuvB complex plays an important role in the rescue of blocked DNA replication forks via replication fork reversal (RFR). RuvA specifically binds to HJ cruciform DNA, conferring on it an open structure. The RuvB hexamer acts as an ATP-dependent pump, pulling dsDNA into and through the RuvAB complex. RuvB forms 2 homohexamers on either side of HJ DNA bound by 1 or 2 RuvA tetramers; 4 subunits per hexamer contact DNA at a time. Coordinated motions by a converter formed by DNA-disengaged RuvB subunits stimulates ATP hydrolysis and nucleotide exchange. Immobilization of the converter enables RuvB to convert the ATP-contained energy into a lever motion, pulling 2 nucleotides of DNA out of the RuvA tetramer per ATP hydrolyzed, thus driving DNA branch migration. The RuvB motors rotate together with the DNA substrate, which together with the progressing nucleotide cycle form the mechanistic basis for DNA recombination by continuous HJ branch migration. Branch migration allows RuvC to scan DNA until it finds its consensus sequence, where it cleaves and resolves cruciform DNA. In Listeria monocytogenes serovar 1/2a (strain ATCC BAA-679 / EGD-e), this protein is Holliday junction branch migration complex subunit RuvB.